Here is a 125-residue protein sequence, read N- to C-terminus: Large ribosomal subunit protein bL12 (125 aa).

This sequence belongs to the bacterial ribosomal protein bL12 family. In terms of assembly, homodimer. Part of the ribosomal stalk of the 50S ribosomal subunit. Forms a multimeric L10(L12)X complex, where L10 forms an elongated spine to which 2 to 4 L12 dimers bind in a sequential fashion. Binds GTP-bound translation factors.

In terms of biological role, forms part of the ribosomal stalk which helps the ribosome interact with GTP-bound translation factors. Is thus essential for accurate translation. This Polaromonas sp. (strain JS666 / ATCC BAA-500) protein is Large ribosomal subunit protein bL12.